We begin with the raw amino-acid sequence, 424 residues long: Glutamyl-tRNA reductase (424 aa).

Residues 49–52, Ser-105, 110–112, and Gln-116 contribute to the substrate site; these read TCNR and EPQ. Cys-50 functions as the Nucleophile in the catalytic mechanism. 185–190 serves as a coordination point for NADP(+); the sequence is GSGETA.

The protein belongs to the glutamyl-tRNA reductase family. As to quaternary structure, homodimer.

It catalyses the reaction (S)-4-amino-5-oxopentanoate + tRNA(Glu) + NADP(+) = L-glutamyl-tRNA(Glu) + NADPH + H(+). Its pathway is porphyrin-containing compound metabolism; protoporphyrin-IX biosynthesis; 5-aminolevulinate from L-glutamyl-tRNA(Glu): step 1/2. Functionally, catalyzes the NADPH-dependent reduction of glutamyl-tRNA(Glu) to glutamate 1-semialdehyde (GSA). This is Glutamyl-tRNA reductase from Legionella pneumophila (strain Lens).